Consider the following 416-residue polypeptide: Glutamyl-tRNA reductase (416 aa).

Substrate contacts are provided by residues 49 to 52 (TCNR), S105, 110 to 112 (EPQ), and Q116. C50 functions as the Nucleophile in the catalytic mechanism. 185–190 (GAGETI) serves as a coordination point for NADP(+).

It belongs to the glutamyl-tRNA reductase family. In terms of assembly, homodimer.

It catalyses the reaction (S)-4-amino-5-oxopentanoate + tRNA(Glu) + NADP(+) = L-glutamyl-tRNA(Glu) + NADPH + H(+). Its pathway is porphyrin-containing compound metabolism; protoporphyrin-IX biosynthesis; 5-aminolevulinate from L-glutamyl-tRNA(Glu): step 1/2. Its function is as follows. Catalyzes the NADPH-dependent reduction of glutamyl-tRNA(Glu) to glutamate 1-semialdehyde (GSA). In Shewanella sediminis (strain HAW-EB3), this protein is Glutamyl-tRNA reductase.